A 269-amino-acid polypeptide reads, in one-letter code: SF-assemblin (269 aa).

The tract at residues 1 to 23 is disordered; that stretch reads MSISPGRSFSPMRASGLTGITSA. The nonhelical region stretch occupies residues 1-24; the sequence is MSISPGRSFSPMRASGLTGITSAG. Residues 25–269 form a rod region; that stretch reads PTAKLEHVSE…LQEGLKLVST (245 aa). The stretch at 98–144 forms a coiled coil; that stretch reads AERSAAQHVDMQNSLKQAVDSLSNRLQDLHSLVREEREQRRNDIEHL.

The protein belongs to the SF-assemblin family.

It is found in the cytoplasm. The protein localises to the cytoskeleton. Functionally, major component of the striated microtubule-associated fibers (SMAFs; system-I-fibers). This chain is SF-assemblin, found in Chlamydomonas moewusii (Chlamydomonas eugametos).